A 309-amino-acid polypeptide reads, in one-letter code: Olfactory receptor 5B2 (309 aa).

The Extracellular segment spans residues methionine 1–isoleucine 23. Asparagine 3 carries an N-linked (GlcNAc...) asparagine glycan. A helical transmembrane segment spans residues proline 24–isoleucine 47. At leucine 48–threonine 55 the chain is on the cytoplasmic side. The chain crosses the membrane as a helical span at residues proline 56–proline 77. Residues lysine 78–glutamine 98 are Extracellular-facing. A disulfide bridge connects residues cysteine 95 and cysteine 187. Residues methionine 99–tyrosine 118 traverse the membrane as a helical segment. Topologically, residues aspartate 119 to serine 137 are cytoplasmic. The helical transmembrane segment at valine 138–phenylalanine 156 threads the bilayer. Topologically, residues histidine 157–serine 193 are extracellular. The helical transmembrane segment at glutamate 194 to leucine 217 threads the bilayer. The Cytoplasmic portion of the chain corresponds to phenylalanine 218–lysine 234. A helical transmembrane segment spans residues alanine 235 to tyrosine 257. Residues leucine 258–lysine 270 are Extracellular-facing. The helical transmembrane segment at methionine 271–leucine 290 threads the bilayer. The Cytoplasmic portion of the chain corresponds to arginine 291 to leucine 309.

This sequence belongs to the G-protein coupled receptor 1 family.

Its subcellular location is the cell membrane. In terms of biological role, odorant receptor. The sequence is that of Olfactory receptor 5B2 (OR5B2) from Homo sapiens (Human).